Consider the following 670-residue polypeptide: Catalase (670 aa).

Active-site residues include H61 and N132. Y345 lines the heme pocket.

Belongs to the catalase family. In terms of assembly, homotetramer. Heme serves as cofactor.

Its subcellular location is the peroxisome matrix. The enzyme catalyses 2 H2O2 = O2 + 2 H2O. In terms of biological role, catalyzes the degradation of hydrogen peroxide (H(2)O(2)) generated by peroxisomal oxidases to water and oxygen, thereby protecting cells from the toxic effects of hydrogen peroxide. The chain is Catalase from Penicillium janthinellum (Penicillium vitale).